The following is a 537-amino-acid chain: Small conductance calcium-activated potassium channel protein 1 (537 aa).

Positions 1-10 (MSSHSHNGSV) are enriched in polar residues. Positions 1 to 90 (MSSHSHNGSV…GKPPTVSHRL (90 aa)) are disordered. Residues 65–76 (QEEEEEEEEEED) show a composition bias toward acidic residues. Residues 108 to 128 (LIFGMFGIVVMVTETELSWGV) form a helical membrane-spanning segment. Residues 137–157 (FALKCLISLSTVILLGLVILY) traverse the membrane as a helical segment. Residues 176–196 (IAMTWERVSLISLELVVCAIH) form a helical membrane-spanning segment. Residues 225–245 (VLLSIPMFLRLYLLARVMLLH) form a helical membrane-spanning segment. A helical transmembrane segment spans residues 274-294 (LMTICPGTVLLVFSVSSWIVA). The segment at residues 314 to 334 (FLGAMWLISITFLSIGYGDMV) is an intramembrane region (pore-forming). The segment at 343-363 (VCLLTGIMGAGCTALVVAVVA) is segment S6. Residues 381–460 (DTQLTKRVKN…LAELAKAQSI (80 aa)) are calmodulin-binding.

It belongs to the potassium channel KCNN family. KCa2.1/KCNN1 subfamily. Homodimer. Heteromultimer with KCNN2 and KCNN3. The complex is composed of 4 channel subunits each of which binds to a calmodulin subunit which regulates the channel activity through calcium-binding. Interacts with calmodulin. Highest expression in brain and liver with lower levels in heart, testis, kidney and colon. In colon, detected in smooth muscle cells. Expressed in atrial and ventricular myocytes with higher levels in atrial myocytes.

It is found in the membrane. The protein localises to the cytoplasm. It localises to the myofibril. The protein resides in the sarcomere. Its subcellular location is the z line. The catalysed reaction is K(+)(in) = K(+)(out). With respect to regulation, inhibited by bee venom neurotoxin apamin. Inhibited by d-tubocurarine and tetraethylammonium (TEA). Small conductance calcium-activated potassium channel that mediates the voltage-independent transmembrane transfer of potassium across the cell membrane through a constitutive interaction with calmodulin which binds the intracellular calcium allowing its opening. The current is characterized by a voltage-independent activation, an intracellular calcium concentration increase-dependent activation and a single-channel conductance of about 3 picosiemens. Also presents an inwardly rectifying current, thus reducing its already small outward conductance of potassium ions, which is particularly the case when the membrane potential displays positive values, above + 20 mV. Activation is followed by membrane hyperpolarization. Thought to regulate neuronal excitability by contributing to the slow component of synaptic afterhyperpolarization. The sequence is that of Small conductance calcium-activated potassium channel protein 1 from Mus musculus (Mouse).